Consider the following 834-residue polypeptide: Pentatricopeptide repeat-containing protein At4g39530 (834 aa).

PPR repeat units follow at residues 78–112 (DTYL…NLVS), 113–144 (WSTM…KDSP), 145–181 (NEYI…GFDR), 182–212 (DVYV…LPEK), 213–247 (STVT…NVVP), 248–282 (DGYI…GLEM), 283–313 (DASL…MPNK), 314–348 (NIIS…GLKP), 349–383 (DMYA…NLGN), 384–414 (DSYV…FAAA), 415–452 (DVVL…LIRP), 453–487 (SLLT…GLNL), 488–518 (DIFA…MKVK), 519–553 (DLVI…RERP), 554–588 (DEFT…GLEC), 589–619 (NPYI…AASR), 620–654 (DVVC…GIEP), 655–689 (NYIT…GIEP), and 690–720 (ETEH…MPTK). A type E motif region spans residues 725–800 (VWRSLLSGCA…EPGRSWIGIN (76 aa)). The tract at residues 801–831 (KEVHIFLSKDKSHCKANQIYEVLDDLLVQIR) is type E(+) motif.

It belongs to the PPR family. PCMP-E subfamily.

The polypeptide is Pentatricopeptide repeat-containing protein At4g39530 (PCMP-E52) (Arabidopsis thaliana (Mouse-ear cress)).